The primary structure comprises 1309 residues: Angiotensin-converting enzyme (1309 aa).

The signal sequence occupies residues 1–33 (MGAASGCRWPWPPLLPLLLMLLLPPPPLPVALA). The Extracellular portion of the chain corresponds to 34 to 1259 (LDSALQPGNF…GLNLEEQQAR (1226 aa)). N-linked (GlcNAc...) asparagine glycosylation is found at Asn42, Asn58, Asn78, Asn115, Asn135, Asn150, and Asn164. Peptidase M2 domains are found at residues 44–627 (TADE…LGWP) and 646–1225 (VSDE…LGWP). A disulfide bridge links Cys161 with Cys169. Residue Tyr235 participates in chloride binding. N-linked (GlcNAc...) asparagine glycosylation is present at Asn322. Cys363 and Cys381 form a disulfide bridge. Residue His394 coordinates Zn(2+). Glu395 functions as the Proton acceptor 1 in the catalytic mechanism. His398 and Glu422 together coordinate Zn(2+). The N-linked (GlcNAc...) asparagine glycan is linked to Asn512. The active-site Proton donor 1 is His523. Asn526 carries N-linked (GlcNAc...) asparagine glycosylation. Arg532 lines the chloride pocket. A disulfide bridge links Cys548 with Cys560. Residues Asn680, Asn698, Asn717, and Asn763 are each glycosylated (N-linked (GlcNAc...) asparagine). Cys760 and Cys766 form a disulfide bridge. Chloride is bound by residues Arg794 and Tyr832. An N-linked (GlcNAc...) asparagine glycan is attached at Asn945. Cys960 and Cys978 are joined by a disulfide. His991 serves as a coordination point for Zn(2+). The Proton acceptor 2 role is filled by Glu992. His995 and Glu1019 together coordinate Zn(2+). Chloride contacts are provided by Trp1093 and Arg1097. The Proton donor 2 role is filled by His1121. Arg1130 lines the chloride pocket. Cys1146 and Cys1158 are disulfide-bonded. N-linked (GlcNAc...) asparagine glycans are attached at residues Asn1194 and Asn1228. The tract at residues 1218 to 1259 (HGEKLGWPQYNWTPNSARLEGSFAGTGRVNFLGLNLEEQQAR) is juxtamembrane stalk. Residues 1260–1280 (VGQWVLLFLGVTLLVATMGLT) form a helical membrane-spanning segment. The Cytoplasmic segment spans residues 1281–1309 (QRLFSIRHQILRRTHRGPQFGSEVELRHS). Phosphoserine is present on Ser1302.

The protein belongs to the peptidase M2 family. In terms of assembly, monomer and homodimer; homodimerizes following binding to an inhibitor. Interacts with calmodulin (CALM1, CALM2 or CALM3); interaction takes place in the cytoplasmic region and regulates phosphorylation and proteolytic cleavage. It depends on Zn(2+) as a cofactor. The cofactor is chloride. In terms of processing, produced following proteolytic cleavage by secretase enzymes that cleave the transmembrane form in the juxtamembrane stalk region upstream of the transmembrane region. Cleavage can take place at different sites of the juxtamembrane stalk region. Post-translationally, phosphorylated by CK2 on Ser-1302; which allows membrane retention. Phosphorylated on tyrosine residues on its extracellular part, promoting cleavage by secretase enzymes and formation of the soluble form (Angiotensin-converting enzyme, soluble form).

It is found in the cell membrane. Its subcellular location is the cytoplasm. It localises to the secreted. It catalyses the reaction Release of a C-terminal dipeptide, oligopeptide-|-Xaa-Yaa, when Xaa is not Pro, and Yaa is neither Asp nor Glu. Thus, conversion of angiotensin I to angiotensin II, with increase in vasoconstrictor activity, but no action on angiotensin II.. The enzyme catalyses angiotensin I + H2O = L-histidyl-L-leucine + angiotensin II. It carries out the reaction bradykinin + H2O = L-Phe-L-Arg + bradykinin(1-7). The catalysed reaction is substance P + H2O = substance P(1-9) + L-Leu-L-Met-NH2. It catalyses the reaction substance P + H2O = substance P(1-8) + Gly-L-Leu-L-Met-NH2. The enzyme catalyses substance P + H2O = L-Phe-L-Phe-Gly-L-Leu-L-Met-NH2 + substance P(1-6). It carries out the reaction neurotensin + H2O = neurotensin(1-11) + L-isoleucyl-L-leucine. The catalysed reaction is goralatide + H2O = N-acetyl-L-seryl-L-aspartate + L-lysyl-L-proline. It catalyses the reaction Met-enkephalin + H2O = L-phenylalanyl-L-methionine + L-tyrosylglycylglycine. The enzyme catalyses Leu-enkephalin + H2O = L-tyrosylglycylglycine + L-phenylalanyl-L-leucine. It carries out the reaction Met-enkephalin-Arg-Phe + H2O = L-arginyl-L-phenylalanine + Met-enkephalin. The dipeptidyl carboxypeptidase activity is strongly activated by chloride. The dipeptidyl carboxypeptidase activity is specifically inhibited by lisinopril, captopril and enalaprilat. Functionally, dipeptidyl carboxypeptidase that removes dipeptides from the C-terminus of a variety of circulating hormones, such as angiotensin I, bradykinin or enkephalins, thereby playing a key role in the regulation of blood pressure, electrolyte homeostasis or synaptic plasticity. Composed of two similar catalytic domains, each possessing a functional active site, with different selectivity for substrates. Plays a major role in the angiotensin-renin system that regulates blood pressure and sodium retention by the kidney by converting angiotensin I to angiotensin II, resulting in an increase of the vasoconstrictor activity of angiotensin. Also able to inactivate bradykinin, a potent vasodilator, and therefore enhance the blood pressure response. Acts as a regulator of synaptic transmission by mediating cleavage of neuropeptide hormones, such as substance P, neurotensin or enkephalins. Catalyzes degradation of different enkephalin neuropeptides (Met-enkephalin, Leu-enkephalin, Met-enkephalin-Arg-Phe and possibly Met-enkephalin-Arg-Gly-Leu). Acts as a regulator of synaptic plasticity in the nucleus accumbens of the brain by mediating cleavage of Met-enkephalin-Arg-Phe, a strong ligand of Mu-type opioid receptor OPRM1, into Met-enkephalin. Met-enkephalin-Arg-Phe cleavage by ACE decreases activation of OPRM1, leading to long-term synaptic potentiation of glutamate release. Also acts as a regulator of hematopoietic stem cell differentiation by mediating degradation of hemoregulatory peptide N-acetyl-SDKP (AcSDKP). Acts as a regulator of cannabinoid signaling pathway by mediating degradation of hemopressin, an antagonist peptide of the cannabinoid receptor CNR1. Involved in amyloid-beta metabolism by catalyzing degradation of Amyloid-beta protein 40 and Amyloid-beta protein 42 peptides, thereby preventing plaque formation. Catalyzes cleavage of cholecystokinin (maturation of Cholecystokinin-8 and Cholecystokinin-5) and Gonadoliberin-1 (both maturation and degradation) hormones. Degradation of hemoregulatory peptide N-acetyl-SDKP (AcSDKP) and amyloid-beta proteins is mediated by the N-terminal catalytic domain, while angiotensin I and cholecystokinin cleavage is mediated by the C-terminal catalytic region. In terms of biological role, soluble form that is released in blood plasma and other body fluids following proteolytic cleavage in the juxtamembrane stalk region. This Sus scrofa (Pig) protein is Angiotensin-converting enzyme.